The following is a 496-amino-acid chain: Hexokinase-1 (496 aa).

A helical transmembrane segment spans residues 4–24; that stretch reads VAVGATVVCTAAVCAVAVLVV. A Hexokinase domain is found at 35–487; the sequence is GRVLAILKAF…SGIGAALLAA (453 aa). A hexokinase small subdomain region spans residues 90-228; it reads SGDEKGLFYA…GLDMRIAALV (139 aa). ADP contacts are provided by glycine 104, threonine 105, and asparagine 106. Residues threonine 194, lysine 195, asparagine 229, and aspartate 230 each contribute to the D-glucose site. The segment at 229 to 476 is hexokinase large subdomain; that stretch reads NDTVGTLAGG…GSVEVTHSND (248 aa). Residue threonine 253 coordinates ADP. D-glucose-binding residues include asparagine 256, glutamate 284, and glutamate 315. Glycine 441 serves as a coordination point for ADP.

The protein belongs to the hexokinase family. In terms of assembly, interacts with RPT5B in nucleus. Interacts with RHIP1. Interacts with KING1 in mitochondria. Interacts with CLF (via SANT domain) and EZA1/SWN (via SANT domain) in nucleus. Highly expressed in flowers and siliques, at intermediate levels in roots and stems, and at lower levels in rosette and cauline leaves.

It localises to the mitochondrion outer membrane. The protein localises to the nucleus. It catalyses the reaction a D-hexose + ATP = a D-hexose 6-phosphate + ADP + H(+). The enzyme catalyses D-fructose + ATP = D-fructose 6-phosphate + ADP + H(+). The catalysed reaction is D-glucose + ATP = D-glucose 6-phosphate + ADP + H(+). It functions in the pathway carbohydrate metabolism; hexose metabolism. The protein operates within carbohydrate degradation; glycolysis; D-glyceraldehyde 3-phosphate and glycerone phosphate from D-glucose: step 1/4. Its function is as follows. Fructose and glucose phosphorylating enzyme. May be involved in the phosphorylation of glucose during the export from mitochondrion to cytosol. Acts as a sugar sensor which may regulate sugar-dependent gene repression or activation. Mediates the effects of sugar on plant growth and development independently of its catalytic activity or the sugar metabolism. May regulate the execution of program cell death in plant cells. Promotes roots and leaves growth. Together with sugar, is involved in the regulation of the expression of aquaporin genes, and reduces leaf water conductance, to coordinate sugar levels with the loss of water through transpiration. Regulates cell proliferation and expansion early during leaf development. Involved in sucrose-induced leaf growth stimulation independently of GPT2. May participate to the stimulation of hypocotyl elongation under long-day (LD) conditions. Forms a nuclear complex with CLF and EZA1/SWN to target common glucose-responsive genes and regulate glucose signaling. Is required for CLF- and EZA1/SWN-mediated histone H3 trimethylation on 'Lys-27' (H3K27me3) and glucose-mediated gene repression. This chain is Hexokinase-1, found in Arabidopsis thaliana (Mouse-ear cress).